Consider the following 211-residue polypeptide: Ras-related protein RABB1c (211 aa).

An N-acetylserine modification is found at S2. 13 to 21 is a binding site for GTP; sequence GDTGVGKSC. Positions 35-43 match the Effector region motif; sequence HDLTIGVEF. Residues 61-65, 119-122, and 149-151 each bind GTP; these read DTAGQ, NKCD, and SAK. S-geranylgeranyl cysteine attachment occurs at residues C209 and C210.

The protein belongs to the small GTPase superfamily. Rab family.

Its subcellular location is the cell membrane. In terms of biological role, intracellular vesicle trafficking and protein transport. This is Ras-related protein RABB1c (RABB1C) from Arabidopsis thaliana (Mouse-ear cress).